Here is a 251-residue protein sequence, read N- to C-terminus: Small ribosomal subunit protein uS2 (251 aa).

It belongs to the universal ribosomal protein uS2 family.

The chain is Small ribosomal subunit protein uS2 from Novosphingobium aromaticivorans (strain ATCC 700278 / DSM 12444 / CCUG 56034 / CIP 105152 / NBRC 16084 / F199).